The primary structure comprises 60 residues: MAVPARRTSKAKKNKRRTHYKVAAPTVKFDETTGDYSRSHRVSLKGYYKGRKIAKAASAE.

It belongs to the bacterial ribosomal protein bL32 family.

This Streptococcus suis (strain 05ZYH33) protein is Large ribosomal subunit protein bL32.